The following is a 279-amino-acid chain: MISIIIDSLRESALHIDSLLKDTSTSYLQSINASGDMQLEIDVRVDKFLSEKLLNLPCVKAICSEEQEEIMYSENKNAPYIIAYDPLDGSSLIDSNLSIGTIFGIYNEELSAKHLIASGYIIYGPRLEMVVAQEQALHYRYNGNMWRNLGALALNTKGKINAPGGTQKHWENKHKAMIESLFAQGYRLRYSGGMVPDLHQILIKGGGLFSYPATSDAPNGKLRKLFEVFPFAFVYEKAGGFATNGTYRILELEVAHLHDSTPCFFGSQSEMNLVKEVYE.

Positions 65, 85, 87, and 88 each coordinate Mg(2+). Residues 88 to 91, tyrosine 190, and lysine 221 contribute to the substrate site; that span reads DGSS. Glutamate 227 provides a ligand contact to Mg(2+).

This sequence belongs to the FBPase class 1 family. Homotetramer. The cofactor is Mg(2+).

The protein resides in the cytoplasm. It carries out the reaction beta-D-fructose 1,6-bisphosphate + H2O = beta-D-fructose 6-phosphate + phosphate. It participates in carbohydrate biosynthesis; gluconeogenesis. This chain is Fructose-1,6-bisphosphatase class 1, found in Helicobacter hepaticus (strain ATCC 51449 / 3B1).